The chain runs to 543 residues: Probable zinc transporter protein DDB_G0283629 (543 aa).

The tract at residues 1-175 (MENFKNNELE…EESKPLNQLR (175 aa)) is disordered. Topologically, residues 1-186 (MENFKNNELE…LDSKKKARYS (186 aa)) are cytoplasmic. Low complexity-rich tracts occupy residues 11 to 26 (SSPI…SINN) and 41 to 55 (NNNN…NSHI). Composition is skewed to basic and acidic residues over residues 56-66 (NNHDHKHNHEH) and 76-104 (HNHD…EHNV). Residues 105–116 (GNKNLLTNNNNQ) show a composition bias toward low complexity. Over residues 130–140 (EDGSSSGGGGG) the composition is skewed to gly residues. A helical membrane pass occupies residues 187-207 (LILALTLTTIFMVGEIVGGYF). The Extracellular portion of the chain corresponds to 208–216 (ANSLAIMTD). Residues 217–237 (AAHLLTDIGAMFLSLFAMWIS) form a helical membrane-spanning segment. Over 238 to 251 (QHPPTSSMSFGFHR) the chain is Cytoplasmic. The helical transmembrane segment at 252 to 272 (AEILGALVSVLMIWALTGVLV) threads the bilayer. Over 273–289 (YEAIQRILYPPDAVDGK) the chain is Extracellular. A helical membrane pass occupies residues 290–310 (IMFIIASCGLFINIIDAIILH). Topologically, residues 311–375 (WGSGGHGHSH…VRNINVHSAY (65 aa)) are cytoplasmic. Residues 319 to 342 (SHGGGHGHSHGIGGGTQKKKSKKN) form a disordered region. The helical transmembrane segment at 376–396 (IHVLGDCFQSIGVMVASCIIW) threads the bilayer. Topologically, residues 397–402 (VHPHWK) are extracellular. The helical transmembrane segment at 403–423 (IADPITTLIFSVIVLGTTIKL) threads the bilayer. Topologically, residues 424 to 543 (LRESLGVLME…NDNLSSPPNQ (120 aa)) are cytoplasmic. The interval 516-543 (KCKDHSCPPPKPKKKKIKNDNLSSPPNQ) is disordered.

Belongs to the cation diffusion facilitator (CDF) transporter (TC 2.A.4) family. SLC30A subfamily.

Its subcellular location is the membrane. Functionally, may be involved in zinc transport from the cytoplasm to either intracellular organelles or extracellular spaces. The chain is Probable zinc transporter protein DDB_G0283629 from Dictyostelium discoideum (Social amoeba).